Reading from the N-terminus, the 379-residue chain is Carbamoyl phosphate synthase small chain (379 aa).

Positions 1–187 (MNFTPALLAL…GSGHAPAPAS (187 aa)) are CPSase. L-glutamine contacts are provided by Ser48, Gly239, and Gly241. Positions 191–378 (KVVAYDFGVK…IELMKPQGVR (188 aa)) constitute a Glutamine amidotransferase type-1 domain. Cys267 functions as the Nucleophile in the catalytic mechanism. L-glutamine contacts are provided by Leu268, Gln271, Asn309, Gly311, and Phe312. Residues His351 and Glu353 contribute to the active site.

The protein belongs to the CarA family. Composed of two chains; the small (or glutamine) chain promotes the hydrolysis of glutamine to ammonia, which is used by the large (or ammonia) chain to synthesize carbamoyl phosphate. Tetramer of heterodimers (alpha,beta)4.

It carries out the reaction hydrogencarbonate + L-glutamine + 2 ATP + H2O = carbamoyl phosphate + L-glutamate + 2 ADP + phosphate + 2 H(+). It catalyses the reaction L-glutamine + H2O = L-glutamate + NH4(+). It functions in the pathway amino-acid biosynthesis; L-arginine biosynthesis; carbamoyl phosphate from bicarbonate: step 1/1. Its pathway is pyrimidine metabolism; UMP biosynthesis via de novo pathway; (S)-dihydroorotate from bicarbonate: step 1/3. In terms of biological role, small subunit of the glutamine-dependent carbamoyl phosphate synthetase (CPSase). CPSase catalyzes the formation of carbamoyl phosphate from the ammonia moiety of glutamine, carbonate, and phosphate donated by ATP, constituting the first step of 2 biosynthetic pathways, one leading to arginine and/or urea and the other to pyrimidine nucleotides. The small subunit (glutamine amidotransferase) binds and cleaves glutamine to supply the large subunit with the substrate ammonia. This Thioalkalivibrio sulfidiphilus (strain HL-EbGR7) protein is Carbamoyl phosphate synthase small chain.